The sequence spans 31 residues: Gamma-conotoxin-like As7a (31 aa).

3 disulfide bridges follow: Cys-2-Cys-16, Cys-9-Cys-20, and Cys-15-Cys-31. A 4-carboxyglutamate modification is found at Glu-14.

Belongs to the conotoxin O1 superfamily. In terms of tissue distribution, expressed by the venom duct.

Its subcellular location is the secreted. In terms of biological role, gamma-conotoxins may act on voltage-gated non-specific cation pacemaker channels (HCN). Elicits toxic effects in the freshwater snail Pomacea paludosa after intramuscular injection, but it has no effect when injected intracerebrally into mice. The polypeptide is Gamma-conotoxin-like As7a (Conus cancellatus (Cancellate cone)).